Here is a 306-residue protein sequence, read N- to C-terminus: Diterpene cyclase eriG (306 aa).

2 helical membrane-spanning segments follow: residues 13-33 (IFFGFSWRDWSTTIIPGSIFA) and 43-63 (ATLVKNYLFLVTWLTPYIYFF). The N-linked (GlcNAc...) asparagine glycan is linked to Asn-64. Helical transmembrane passes span 115–135 (FLPETLCWIATVAFLCLTSYG), 161–181 (IAPATPTSDAWVYAVSVWAGL), 213–233 (LIITFFALPAACWVLSLAGIF), and 265–285 (MFYTYIFCLILAFCALDGLGL).

Belongs to the UbiA prenyltransferase family. It depends on Mg(2+) as a cofactor.

The protein resides in the membrane. The catalysed reaction is (2E,6E,10E)-geranylgeranyl diphosphate = (-)-cyatha-3,12-diene + diphosphate. The protein operates within secondary metabolite biosynthesis. EDTA completely blocks the reaction. In terms of biological role, diterpene cyclase; part of the gene cluster that mediates the biosynthesis of erinacines, cyathane-xylosides that show unique biological activities, including leishmanicidal activity, stimulating activity for nerve growth-factor synthesis, and agonistic activity toward the kappa opioid receptor. Within the pathway, eriG acts as a diterpene cyclase that converts geranylgeranyl diphosphate (GGPP) into cyatha-3,12-diene. EriG is unable to use geranyl diphosphate (GPP) or farnesyl diphosphate (FPP) as substrates. The first step of the erinacines biosynthesis pathway is catalyzed by the geranylgeranyl diphosphate (GGPP) synthase eriE via conversion of farnesyl pyrophosphate and isopentyl pyrophosphate into geranylgeranyl pyrophosphate (GGPP). GGPP is then substrate of the diterpene cyclase eriG for the production of cyatha-3,12-diene. The cytochrome P450 monooxygenase eriI then hydroxylates cyatha-3,12-diene at C-14 of the seven-membered ring to produce erinacol, which is further hydroxylated at C-15 by the cytochrome P450 monooxygenase eriC to yield cyathadiol. The cytochrome P450 monooxygenase eriA then catalyzes C-11 hydroxylation in the presence of the short chain dehydrogenase/reductase (SDR) eriH, which leads to the production of cyathatriol. The acetyltransferase eriL converts cyathatriol into 11-O-acetyl-cyathatriol. The SDR eriH catalyzes further oxidation of 11-O-acetyl-cyathatriol into 1-O-acetylcyathin A3. Finally, the glycosyl transferase eriJ tranfers xylose from UDP-xylose onto C-14 of 11-O-acetyl-cyathatriol to form eracine Q. EriJ is also able to convert 11-O-acetyl-cyathatriol to eracine Q2 by using UDP-D-glucose as cosubstrate, but at a lower rate. The sequence is that of Diterpene cyclase eriG from Hericium erinaceus (Lion's mane mushroom).